Consider the following 489-residue polypeptide: Cytochrome P450 monooxygenase prhB (489 aa).

3 helical membrane-spanning segments follow: residues 1 to 21 (MFSFGFLITAVVFWVVTKVIY), 212 to 232 (VIFQCLGFFPWIKEPLVMIFA), and 287 to 307 (LFIGAGAESTATLLMGVAYLL). 2 N-linked (GlcNAc...) asparagine glycosylation sites follow: asparagine 347 and asparagine 379. Cysteine 431 provides a ligand contact to heme.

Belongs to the cytochrome P450 family. The cofactor is heme.

Its subcellular location is the membrane. It participates in secondary metabolite biosynthesis; terpenoid biosynthesis. Functionally, cytochrome P450 monooxygenase; part of the gene cluster that mediates the biosynthesis of paraherquonin, a meroterpenoid with a unique, highly congested hexacyclic molecular architecture. The first step of the pathway is the synthesis of 3,5-dimethylorsellinic acid (DMOA) by the polyketide synthase prhL. Synthesis of DMOA is followed by farnesylation by the prenyltransferase prhE, methylesterification by the methyl-transferase prhM, epoxidation of the prenyl chain by the flavin-dependent monooxygenase prhF, and cyclization of the farnesyl moiety by the terpene cyclase prhH, to yield the tetracyclic intermediate, protoaustinoid A. The short chain dehydrogenase prhI then oxidizes the C-3 alcohol group of the terpene cyclase product to transform protoaustinoid A into protoaustinoid B. The FAD-binding monooxygenase prhJ catalyzes the oxidation of protoaustinoid B into preaustinoid A which is further oxidized into preaustinoid A1 by FAD-binding monooxygenase phrK. Finally, prhA leads to berkeleydione via the berkeleyone B intermediate. PrhA is a multifunctional dioxygenase that first desaturates at C5-C6 to form berkeleyone B, followed by rearrangement of the A/B-ring to form the cycloheptadiene moiety in berkeleydione. Berkeleydione serves as the key intermediate for the biosynthesis of paraherquonin as well as many other meroterpenoids. The cytochrome P450 monooxygenases prhB, prhD, and prhN, as well as the isomerase prhC, are probably involved in the late stage of paraherquonin biosynthesis, after the production of berkeleydione. Especially prhC might be a multifunctional enzyme that catalyzes the D-ring expansion via intramolecular methoxy rearrangement, as well as the hydrolysis of the expanded D-ring. This Penicillium brasilianum protein is Cytochrome P450 monooxygenase prhB.